Here is a 152-residue protein sequence, read N- to C-terminus: Lipoprotein signal peptidase (152 aa).

3 consecutive transmembrane segments (helical) span residues 5–25 (LFVL…FWIV), 61–81 (WFFV…LATH), and 84–104 (LNIW…GNFI). Active-site residues include Asp-114 and Asp-130. A helical membrane pass occupies residues 125–145 (IFNVADSYLTVGVILLLICLW).

The protein belongs to the peptidase A8 family.

Its subcellular location is the cell membrane. It catalyses the reaction Release of signal peptides from bacterial membrane prolipoproteins. Hydrolyzes -Xaa-Yaa-Zaa-|-(S,diacylglyceryl)Cys-, in which Xaa is hydrophobic (preferably Leu), and Yaa (Ala or Ser) and Zaa (Gly or Ala) have small, neutral side chains.. The protein operates within protein modification; lipoprotein biosynthesis (signal peptide cleavage). Functionally, this protein specifically catalyzes the removal of signal peptides from prolipoproteins. This Streptococcus pyogenes serotype M1 protein is Lipoprotein signal peptidase.